The following is a 279-amino-acid chain: 3-methyl-2-oxobutanoate hydroxymethyltransferase (279 aa).

Positions 43 and 82 each coordinate Mg(2+). Residues 43-44 (DS), Asp82, and Lys112 contribute to the 3-methyl-2-oxobutanoate site. Glu114 provides a ligand contact to Mg(2+). Glu181 (proton acceptor) is an active-site residue.

This sequence belongs to the PanB family. In terms of assembly, homodecamer; pentamer of dimers. The cofactor is Mg(2+).

It localises to the cytoplasm. It catalyses the reaction 3-methyl-2-oxobutanoate + (6R)-5,10-methylene-5,6,7,8-tetrahydrofolate + H2O = 2-dehydropantoate + (6S)-5,6,7,8-tetrahydrofolate. Its pathway is cofactor biosynthesis; (R)-pantothenate biosynthesis; (R)-pantoate from 3-methyl-2-oxobutanoate: step 1/2. Catalyzes the reversible reaction in which hydroxymethyl group from 5,10-methylenetetrahydrofolate is transferred onto alpha-ketoisovalerate to form ketopantoate. This Bacillus anthracis (strain A0248) protein is 3-methyl-2-oxobutanoate hydroxymethyltransferase.